The chain runs to 431 residues: Probable zinc metalloprotease Lema_P086240 (431 aa).

Asn46 carries an N-linked (GlcNAc...) asparagine glycan. Residues His117, Asp137, and Glu170 each contribute to the Zn(2+) site. Residue Asn185 is glycosylated (N-linked (GlcNAc...) asparagine). Asp197 provides a ligand contact to Zn(2+). Asn258, Asn310, Asn349, Asn359, and Asn369 each carry an N-linked (GlcNAc...) asparagine glycan. The region spanning 344 to 431 (PGMPRNVTID…KSPAVYPFPG (88 aa)) is the Fibronectin type-III domain.

Belongs to the peptidase M28 family. M28B subfamily. Requires Zn(2+) as cofactor.

Its subcellular location is the secreted. The chain is Probable zinc metalloprotease Lema_P086240 from Leptosphaeria maculans (strain JN3 / isolate v23.1.3 / race Av1-4-5-6-7-8) (Blackleg fungus).